Reading from the N-terminus, the 335-residue chain is MKISRSLSTVEVHTGGEAFRIVTSGLPRLPGDTIVRRRAWLKEHADEIRRALMFEPRGHADMYGGYLTEPVSPNADFGVIFVHNEGYSDHCGHGVIALSTAAVELGWVQRTVPETRVGIDAPCGFIEAFVQWDGEHAGPVRFVNVPSFIWQRDVAVDTPSFGTVTGDIAYGGAFYFYVDGAPFDLPVRESAVERLIRFGAEVKAAANAKYPVEHPEIPEINHIYGTIIANAPRDPRSTQANCCVFADREVDRSPTGSGTGGRVAQLYQRGLLAAGDTLVNESIVGTVFKGRVLRETTVGGMPAVIPEVEGSAHICGFANWIVDERDPLTYGFLVR.

The Proton acceptor role is filled by Cys91. Residues 92-93, Asp251, and 256-257 contribute to the substrate site; these read GH and GS.

The protein belongs to the proline racemase family.

The catalysed reaction is trans-3-hydroxy-L-proline = cis-3-hydroxy-D-proline. It carries out the reaction trans-4-hydroxy-L-proline = cis-4-hydroxy-D-proline. Functionally, catalyzes the epimerization of trans-3-hydroxy-L-proline (t3LHyp) to cis-3-hydroxy-D-proline (c3DHyp) in vitro. Can also catalyze the epimerization of trans-4-hydroxy-L-proline (t3LHyp) to cis-4-hydroxy-D-proline (c4DHyp), albeit with 3.6-fold lower efficiency. Displays no proline racemase activity. The chain is 3-hydroxyproline 2-epimerase from Burkholderia multivorans (strain ATCC 17616 / 249).